The primary structure comprises 217 residues: Small ribosomal subunit protein uS5 (217 aa).

One can recognise an S5 DRBM domain in the interval 49–112; the sequence is LEEKVLDVKL…AQAKKNIIRV (64 aa).

This sequence belongs to the universal ribosomal protein uS5 family. Part of the 30S ribosomal subunit. Contacts protein S4.

Functionally, with S4 and S12 plays an important role in translational accuracy. The sequence is that of Small ribosomal subunit protein uS5 from Methanocaldococcus jannaschii (strain ATCC 43067 / DSM 2661 / JAL-1 / JCM 10045 / NBRC 100440) (Methanococcus jannaschii).